The primary structure comprises 144 residues: Small ribosomal subunit protein bS6 (144 aa).

The segment at 99–144 (KASPLAPCEEKGEEGKAEDAADELTTFGMADDDDLGDDDDTVEAGI) is disordered. The span at 106 to 117 (CEEKGEEGKAED) shows a compositional bias: basic and acidic residues. A compositionally biased stretch (acidic residues) spans 128-144 (ADDDDLGDDDDTVEAGI).

The protein belongs to the bacterial ribosomal protein bS6 family.

Binds together with bS18 to 16S ribosomal RNA. The chain is Small ribosomal subunit protein bS6 from Magnetococcus marinus (strain ATCC BAA-1437 / JCM 17883 / MC-1).